Here is a 346-residue protein sequence, read N- to C-terminus: Alkanal monooxygenase alpha chain (346 aa).

As to quaternary structure, heterodimer of an alpha and a beta chain.

The catalysed reaction is a long-chain fatty aldehyde + FMNH2 + O2 = a long-chain fatty acid + hnu + FMN + H2O + 2 H(+). Functionally, light-emitting reaction in luminous bacteria. This chain is Alkanal monooxygenase alpha chain (luxA), found in Photobacterium phosphoreum.